The following is a 443-amino-acid chain: Methylenetetrahydrofolate--tRNA-(uracil-5-)-methyltransferase TrmFO (443 aa).

8–13 (GAGLAG) lines the FAD pocket.

The protein belongs to the MnmG family. TrmFO subfamily. FAD is required as a cofactor.

The protein resides in the cytoplasm. It catalyses the reaction uridine(54) in tRNA + (6R)-5,10-methylene-5,6,7,8-tetrahydrofolate + NADH + H(+) = 5-methyluridine(54) in tRNA + (6S)-5,6,7,8-tetrahydrofolate + NAD(+). The catalysed reaction is uridine(54) in tRNA + (6R)-5,10-methylene-5,6,7,8-tetrahydrofolate + NADPH + H(+) = 5-methyluridine(54) in tRNA + (6S)-5,6,7,8-tetrahydrofolate + NADP(+). In terms of biological role, catalyzes the folate-dependent formation of 5-methyl-uridine at position 54 (M-5-U54) in all tRNAs. This chain is Methylenetetrahydrofolate--tRNA-(uracil-5-)-methyltransferase TrmFO, found in Thermus thermophilus (strain ATCC 27634 / DSM 579 / HB8).